Consider the following 231-residue polypeptide: 7-cyano-7-deazaguanine synthase (231 aa).

7–17 (LSSGLDSVAAL) serves as a coordination point for ATP. 4 residues coordinate Zn(2+): Cys195, Cys203, Cys206, and Cys209.

It belongs to the QueC family. Zn(2+) is required as a cofactor.

It carries out the reaction 7-carboxy-7-deazaguanine + NH4(+) + ATP = 7-cyano-7-deazaguanine + ADP + phosphate + H2O + H(+). The protein operates within purine metabolism; 7-cyano-7-deazaguanine biosynthesis. Catalyzes the ATP-dependent conversion of 7-carboxy-7-deazaguanine (CDG) to 7-cyano-7-deazaguanine (preQ(0)). The protein is 7-cyano-7-deazaguanine synthase of Methanosarcina barkeri (strain Fusaro / DSM 804).